Reading from the N-terminus, the 216-residue chain is Large ribosomal subunit protein uL3 (216 aa).

Residues 134 to 153 (RATHGNSRSHNVPGSIGMAQ) form a disordered region. The residue at position 153 (Gln153) is an N5-methylglutamine.

Belongs to the universal ribosomal protein uL3 family. In terms of assembly, part of the 50S ribosomal subunit. Forms a cluster with proteins L14 and L19. In terms of processing, methylated by PrmB.

Functionally, one of the primary rRNA binding proteins, it binds directly near the 3'-end of the 23S rRNA, where it nucleates assembly of the 50S subunit. In Cupriavidus pinatubonensis (strain JMP 134 / LMG 1197) (Cupriavidus necator (strain JMP 134)), this protein is Large ribosomal subunit protein uL3.